Here is a 335-residue protein sequence, read N- to C-terminus: UPF0353 protein BCG_1543 (335 aa).

The next 2 membrane-spanning stretches (helical) occupy residues 18-38 and 67-87; these read WFFLFLFVVAGLVALYILMQL and VPAILLVLSLLLFTIAMAGPT. A VWFA domain is found at 98–294; the sequence is VVMLVIDVSQ…AELRAVYSSL (197 aa). The helical transmembrane segment at 309 to 329 threads the bilayer; it reads VGWLRLGALALALAALAALLI.

Belongs to the UPF0353 family.

Its subcellular location is the cell membrane. In Mycobacterium bovis (strain BCG / Pasteur 1173P2), this protein is UPF0353 protein BCG_1543.